Consider the following 557-residue polypeptide: Potassium-transporting ATPase potassium-binding subunit (557 aa).

Helical transmembrane passes span 6 to 26 (IQLL…GLGL), 59 to 79 (ALSL…ILFF), 127 to 147 (AGLT…LLAL), 172 to 192 (LYVL…FGVV), 247 to 267 (ISNF…VFLY), 278 to 298 (WAIF…VWTF), 363 to 383 (IVFG…LLTV), 410 to 430 (ILGI…SVSV), 475 to 495 (VMIA…VLVI), and 520 to 540 (FYIL…FPVL).

It belongs to the KdpA family. As to quaternary structure, the system is composed of three essential subunits: KdpA, KdpB and KdpC.

The protein resides in the cell inner membrane. In terms of biological role, part of the high-affinity ATP-driven potassium transport (or Kdp) system, which catalyzes the hydrolysis of ATP coupled with the electrogenic transport of potassium into the cytoplasm. This subunit binds the periplasmic potassium ions and delivers the ions to the membrane domain of KdpB through an intramembrane tunnel. This is Potassium-transporting ATPase potassium-binding subunit from Leptospira interrogans serogroup Icterohaemorrhagiae serovar copenhageni (strain Fiocruz L1-130).